Reading from the N-terminus, the 125-residue chain is Small ribosomal subunit protein uS13 (125 aa).

Belongs to the universal ribosomal protein uS13 family. In terms of assembly, part of the 30S ribosomal subunit. Forms a loose heterodimer with protein S19. Forms two bridges to the 50S subunit in the 70S ribosome.

In terms of biological role, located at the top of the head of the 30S subunit, it contacts several helices of the 16S rRNA. In the 70S ribosome it contacts the 23S rRNA (bridge B1a) and protein L5 of the 50S subunit (bridge B1b), connecting the 2 subunits; these bridges are implicated in subunit movement. Contacts the tRNAs in the A and P-sites. This is Small ribosomal subunit protein uS13 from Rickettsia massiliae (strain Mtu5).